The chain runs to 343 residues: Aspartate-semialdehyde dehydrogenase (343 aa).

Residue 11–14 (TGMV) coordinates NADP(+). Arg109 lines the phosphate pocket. Cys148 acts as the Acyl-thioester intermediate in catalysis. Gln174 is a binding site for substrate. An NADP(+)-binding site is contributed by 177-178 (SG). Glu200 lines the substrate pocket. Lys203 provides a ligand contact to phosphate. Arg233 is a binding site for substrate. Catalysis depends on His240, which acts as the Proton acceptor. Residue 321–322 (NT) coordinates NADP(+).

The protein belongs to the aspartate-semialdehyde dehydrogenase family. As to quaternary structure, homodimer.

It catalyses the reaction L-aspartate 4-semialdehyde + phosphate + NADP(+) = 4-phospho-L-aspartate + NADPH + H(+). Its pathway is amino-acid biosynthesis; L-lysine biosynthesis via DAP pathway; (S)-tetrahydrodipicolinate from L-aspartate: step 2/4. It participates in amino-acid biosynthesis; L-methionine biosynthesis via de novo pathway; L-homoserine from L-aspartate: step 2/3. It functions in the pathway amino-acid biosynthesis; L-threonine biosynthesis; L-threonine from L-aspartate: step 2/5. Functionally, catalyzes the NADPH-dependent formation of L-aspartate-semialdehyde (L-ASA) by the reductive dephosphorylation of L-aspartyl-4-phosphate. This chain is Aspartate-semialdehyde dehydrogenase, found in Archaeoglobus fulgidus (strain ATCC 49558 / DSM 4304 / JCM 9628 / NBRC 100126 / VC-16).